The sequence spans 475 residues: uncharacterized protein (475 aa).

4Fe-4S ferredoxin-type domains lie at 303-333 and 352-381; these read ASEF…GHGY and YKDF…LSKL. 8 residues coordinate [4Fe-4S] cluster: Cys-312, Cys-315, Cys-318, Cys-322, Cys-362, Cys-365, Cys-368, and Cys-372.

The protein belongs to the LutB/YkgF family.

This is an uncharacterized protein from Escherichia coli (strain K12).